We begin with the raw amino-acid sequence, 72 residues long: Rubredoxin in uptake hydrogenase operon (72 aa).

The 52-residue stretch at 19 to 70 (DAVLECKICWHRYDPAVGDEVWQILAGTPFAALPAHWRCPQCDGDREQFMVV) folds into the Rubredoxin-like domain. Residues Cys-24, Cys-27, Cys-57, and Cys-60 each coordinate Fe cation.

Belongs to the rubredoxin family. Requires Fe(3+) as cofactor.

Its function is as follows. Could be an electron transport intermediate in hydrogen oxidation. This chain is Rubredoxin in uptake hydrogenase operon (hupR), found in Azotobacter chroococcum mcd 1.